The sequence spans 161 residues: Dihydrofolate reductase type 1 from Tn4003 (161 aa).

The DHFR domain occupies 2–157 (TLSIIVAHDK…IPHTFLHLVR (156 aa)). 6-8 (IVA) contributes to the substrate binding site. NADP(+)-binding positions include 7–8 (VA) and 15–20 (IGYQNQ). D28 is a substrate binding site. 44 to 47 (ARKT) lines the NADP(+) pocket. R58 is a binding site for substrate. Residues 63–66 (LTNQ) and 93–98 (FGGQTL) each bind NADP(+). T112 contributes to the substrate binding site.

It belongs to the dihydrofolate reductase family.

The catalysed reaction is (6S)-5,6,7,8-tetrahydrofolate + NADP(+) = 7,8-dihydrofolate + NADPH + H(+). The protein operates within cofactor biosynthesis; tetrahydrofolate biosynthesis; 5,6,7,8-tetrahydrofolate from 7,8-dihydrofolate: step 1/1. Functionally, key enzyme in folate metabolism. Catalyzes an essential reaction for de novo glycine and purine synthesis, and for DNA precursor synthesis. This Staphylococcus aureus protein is Dihydrofolate reductase type 1 from Tn4003 (dfrA).